The chain runs to 639 residues: MEPPLSKRNPPALRLADLATAQVQPLQNMTGFPALAGPPAHSQLRAAVAHLRLRDLGADPGVATTPLGPEHMAQASTLGLSPPSQAFPAHPEAPAAAARAAALVAHPGAGSYPCGGGSSGAQPSAPPPPAPPLPPTPSPPPPPPPPPPPALSGYTTTNSGGGGSSGKGHSRDFVLRRDLSATAPAAAMHGAPLGGEQRSGTGSPQHPAPPPHSAGMFISASGTYAGPDGSGGPALFPALHDTPGAPGGHPHPLNGQMRLGLAAAAAAAAAELYGRAEPPFAPRSGDAHYGAVAAAAAAALHGYGAVNLNLNLAAAAAAAAAGPGPHLQHHAPPPAPPPPPAPAQHPHQHHPHLPGAAGAFLRYMRQPIKQELICKWIDPDELAGLPPPPPPPPPPPPPPPAGGAKPCSKTFGTMHELVNHVTVEHVGGPEQSSHVCFWEDCPREGKPFKAKYKLINHIRVHTGEKPFPCPFPGCGKVFARSENLKIHKRTHTGEKPFKCEFDGCDRKFANSSDRKKHSHVHTSDKPYYCKIRGCDKSYTHPSSLRKHMKIHCKSPPPSPGPLGYSSVGTPVGAPLSPVLDPARSHSSTLSPQVTNLNEWYVCQASGAPSHLHTPSSNGTTSETEDEEIYGNPEVVRTIH.

Disordered stretches follow at residues 113 to 171, 189 to 251, 323 to 355, and 379 to 409; these read PCGG…GHSR, HGAP…GHPH, PGPHLQHHAPPPAPPPPPAPAQHPHQHHPHLPG, and PDELAGLPPPPPPPPPPPPPPPAGGAKPCSK. Residues 124 to 150 show a composition bias toward pro residues; the sequence is SAPPPPAPPLPPTPSPPPPPPPPPPPA. 2 stretches are compositionally biased toward pro residues: residues 331–343 and 385–401; these read APPPAPPPPPAPA and LPPPPPPPPPPPPPPPA. The C2H2-type 1; atypical zinc finger occupies 434–461; the sequence is HVCFWEDCPREGKPFKAKYKLINHIRVH. 3 C2H2-type zinc fingers span residues 467 to 491, 497 to 521, and 527 to 551; these read FPCPFPGCGKVFARSENLKIHKRTH, FKCEFDGCDRKFANSSDRKKHSHVH, and YYCKIRGCDKSYTHPSSLRKHMKIH. The tract at residues 548-568 is disordered; it reads MKIHCKSPPPSPGPLGYSSVG. 3 positions are modified to phosphoserine: S554, S558, and S576. The tract at residues 607-639 is disordered; that stretch reads APSHLHTPSSNGTTSETEDEEIYGNPEVVRTIH. Positions 612 to 621 are enriched in polar residues; that stretch reads HTPSSNGTTS.

The protein belongs to the GLI C2H2-type zinc-finger protein family.

The protein resides in the nucleus. In terms of biological role, essential for neural crest development, converting cells from an epidermal fate to a neural crest cell fate. Binds to DNA. This Homo sapiens (Human) protein is Zinc finger protein ZIC 5 (ZIC5).